The primary structure comprises 562 residues: MFS-type transporter calB (562 aa).

A compositionally biased stretch (polar residues) spans 1-16; it reads MDEVTRTAQRSPSITE. Residues 1 to 45 form a disordered region; that stretch reads MDEVTRTAQRSPSITETHAGETKLAGPGEKEGDVESPVDPSADSE. A helical transmembrane segment spans residues 57 to 77; it reads FAILASVTLSAFLMLLDGSII. N-linked (GlcNAc...) asparagine glycosylation occurs at N83. Transmembrane regions (helical) follow at residues 94–113, 123–143, 154–174, 184–204, 213–233, 256–276, 284–304, 329–349, 362–382, 389–409, 418–438, 451–471, and 530–550; these read IGWY…PLSG, WTYL…GVAN, VAGL…AGAV, GIYL…GGAL, CFYI…FLQV, LIGF…LYYG, SSQV…FALW, INGA…PIYF, VNTL…GVLV, LPFA…VTLF, WIGY…MGII, VGIA…VVVG, and VFYL…GMGW. A glycan (N-linked (GlcNAc...) asparagine) is linked at N557.

This sequence belongs to the major facilitator superfamily. TCR/Tet family.

It is found in the cell membrane. MFS-type transporter; part of the gene cluster that mediates the biosynthesis of calbistrin A and related compounds. Calbistrin A is a secondary metabolite with an interesting structure that was recently found to have bioactivity against leukemia cells. It consists of two polyketides linked by an ester bond: a bicyclic decalin containing polyketide and a linear 12 carbon dioic acid structure. Required for the secretion of calbistrin A and calbistrin C, as well as of related compounds decumbenone A, B and C. This Penicillium decumbens protein is MFS-type transporter calB.